The sequence spans 273 residues: MAPRRPYWRGYLKLSLVTCPVAMTPATSESEKVRFHTLNKDTGNRVVSHYVDSVTGKPVKDEQEAKGYERGENDYVLLTDEDLESVELETVRTIDIEKFIPRGSIEWVYLETPFYLTANDKIGDEAFAVIRQAMEAEDVVGVSRVVLGRRERAVVLEPRGEGIVVWTLRFGDEVRPESEYFTGIEKKSDAKGVSAVEAVIKKRMQDWSPEMVSDPIQESLLKLIADKKKAKKPSKAKASKSTKGDDEEKSNVVNIMDALKKSVAKELKSRKAG.

The Ku domain occupies 13 to 190 (KLSLVTCPVA…FTGIEKKSDA (178 aa)). Residues 227–251 (KKKAKKPSKAKASKSTKGDDEEKSN) are disordered. Over residues 228–240 (KKAKKPSKAKASK) the composition is skewed to basic residues.

It belongs to the prokaryotic Ku family. Homodimer. Interacts with LigD.

With LigD forms a non-homologous end joining (NHEJ) DNA repair enzyme, which repairs dsDNA breaks with reduced fidelity. Binds linear dsDNA with 5'- and 3'- overhangs but not closed circular dsDNA nor ssDNA. Recruits and stimulates the ligase activity of LigD. The protein is Non-homologous end joining protein Ku of Allorhizobium ampelinum (strain ATCC BAA-846 / DSM 112012 / S4) (Agrobacterium vitis (strain S4)).